Reading from the N-terminus, the 354-residue chain is MLCSLFLLLLAVGRVQTTRPCFPGCQCEEETFGLFDSFSLIRVDCSSLGPHIVPVPIPLDTAHLDLSSNRLETVNESVLAGPGYTTLAGLDLSYNLLTSIMPSAFSRLRYLESLDLSHNGLAALPAEIFTSSPLSDINLSHNRLREVSISAFTTHSQGRALHVDLSHNLIHRLLPHPARASLPAPTIQSLNLSWNRFRAVPDLRDLPLRYLSLDGNPLATINPDAFMGLAGLTHLSLASLQGILHLPPHGFRELPGLQVLDLSGNPKLKWAGAEVFSGLGLLQELDLSGSSLVPLPEMLLHHLPALQSVSVGQDVQCRRLVREGAYHRQPGSSPKVVLHCGDTQESAARGPDIL.

A signal peptide spans 1–17 (MLCSLFLLLLAVGRVQT). The 42-residue stretch at 18 to 59 (TRPCFPGCQCEEETFGLFDSFSLIRVDCSSLGPHIVPVPIPL) folds into the LRRNT domain. 10 LRR repeats span residues 60 to 81 (DTAH…VLAG), 86 to 107 (TLAG…AFSR), 110 to 131 (YLES…IFTS), 133 to 154 (PLSD…AFTT), 160 to 180 (ALHV…PARA), 186 to 207 (TIQS…RDLP), 208 to 228 (LRYL…AFMG), 231 to 253 (GLTH…GFRE), 256 to 277 (GLQV…EVFS), and 281 to 302 (LLQE…LLHH). Asparagine 75 is a glycosylation site (N-linked (GlcNAc...) asparagine). Asparagine 138 carries N-linked (GlcNAc...) asparagine glycosylation. Asparagine 191 is a glycosylation site (N-linked (GlcNAc...) asparagine).

As to quaternary structure, interacts with FZD4 (via FZ domain); competes with WNT2B for binding to FZD4, inhibiting Wnt signaling and repressing peripheral eye development. Interacts with TGFB1; the interaction contributes to regulation of the hair cycle. Interacts with netrin. Interacts with CCN2. As to expression, expressed in macrophages in inflamed wounds with wound expression starting 2 days post-wounding (dpw) (at protein level). At 7 dpw, expressed from epidermis and extracellular matrix in the wound edge to neoepidermis and granulation tissue and in panniculus carnosus under the granulation tissue (at protein level). After fibrosis, disappears in the dermal area at 11 dpw (at protein level). Expressed in the hair follicle during morphogenesis and the hair cycle (at protein level). In embryonic brain, strong expression in the olfactory bulb, anterior olfactory nucleus, neocortex, piriform cortex, glial wedge, midline zipper glia, indusium griseum and the area surrounding the anterior commissure (AC) but not on AC axons (at protein level). In the adult eye, expressed in retinal layers, lens epithelium, and ciliary body where it is expressed predominantly in the inner non-pigmented layer. Expressed in almost all brain regions in the embryo, in the cortex and the lateral ventricle at P0 and is restricted to the subventricular zone and lateral nucleus of the amygdala in adults. Prominent expression in hippocampal regions from early postnatal stages until postnatal day 15 and gradually declines at later stages. Expressed in almost all bone regions in the femurs of juveniles. In the inner ear, accumulates in nonprosensory regions during early embryonic stages and in both nonprosensory and prosensory regions in late embryonic stages. In the adult ear, expressed in the organ of Corti, spiral ganglion cells, and the stria vascularis. Highly expressed in the liver where it is detected primarily in hepatocytes but not in non-parenchymal cells.

The protein localises to the secreted. Functionally, contributes to various developmental events and other processes such as wound healing and cholesterol homeostasis through its interactions with multiple signaling pathways. Wnt signaling inhibitor which competes with WNT2B for binding to Wnt receptor FZD4 and represses WNT2B-dependent development of the peripheral eye. Plays a role in regulating the hair cycle by controlling TGFB1 signaling. Required for the development of the anterior commissure in the brain by inhibiting neurite outgrowth. Essential for terminal differentiation of hippocampal neural stem cells. Plays a role in regulating bone elongation and bone mass by modulating growth plate chondrocyte function and overall body size. Required for development of the inner ear through its involvement in stereocilia formation in inner hair cells. Facilitates wound healing by inhibiting secretion of TGFB1 from macrophages which prevents myofibroblast differentiation, maintaining inflammatory cell quiescence. Plays a role in cholesterol homeostasis by reducing circulating high-density lipoprotein cholesterol, lowering cholesterol efflux capacity and decreasing cholesterol-to-bile acid conversion in the liver. In one study, shown to negatively regulate sympathetic innervation in brown fat, leading to reduced energy expenditure. In another study, shown not to affect brown fat thermogenic capacity, body weight gain or glucose homeostasis. This is Tsukushi from Mus musculus (Mouse).